Consider the following 422-residue polypeptide: Adenylosuccinate synthetase (422 aa).

GTP contacts are provided by residues 11 to 17 (GDEGKGK) and 39 to 41 (GHT). The active-site Proton acceptor is Asp12. Mg(2+) is bound by residues Asp12 and Gly39. Residues 12–15 (DEGK), 37–40 (NAGH), Thr129, Arg143, Asn219, Thr234, and Arg298 each bind IMP. His40 serves as the catalytic Proton donor. A substrate-binding site is contributed by 294 to 300 (VTTGRRR). GTP-binding positions include Arg300, 326–328 (KLD), and 409–411 (GTG).

Belongs to the adenylosuccinate synthetase family. As to quaternary structure, homodimer. Mg(2+) is required as a cofactor.

It localises to the cytoplasm. It catalyses the reaction IMP + L-aspartate + GTP = N(6)-(1,2-dicarboxyethyl)-AMP + GDP + phosphate + 2 H(+). Its pathway is purine metabolism; AMP biosynthesis via de novo pathway; AMP from IMP: step 1/2. Functionally, plays an important role in the de novo pathway and in the salvage pathway of purine nucleotide biosynthesis. Catalyzes the first committed step in the biosynthesis of AMP from IMP. In Ajellomyces capsulatus (strain H143) (Darling's disease fungus), this protein is Adenylosuccinate synthetase.